We begin with the raw amino-acid sequence, 207 residues long: Large ribosomal subunit protein uL4 (207 aa).

The disordered stretch occupies residues 44–78 (MRQGTHKTKNRAEVSGGGRKPWRQKGTGRARQGSI).

The protein belongs to the universal ribosomal protein uL4 family. As to quaternary structure, part of the 50S ribosomal subunit.

Its function is as follows. One of the primary rRNA binding proteins, this protein initially binds near the 5'-end of the 23S rRNA. It is important during the early stages of 50S assembly. It makes multiple contacts with different domains of the 23S rRNA in the assembled 50S subunit and ribosome. In terms of biological role, this protein when expressed in E.coli represses the endogenous S10 operon; this may not occur in B.stearothermophilus however. Forms part of the polypeptide exit tunnel. This is Large ribosomal subunit protein uL4 (rplD) from Geobacillus stearothermophilus (Bacillus stearothermophilus).